Consider the following 119-residue polypeptide: Large ribosomal subunit protein uL18 (119 aa).

Belongs to the universal ribosomal protein uL18 family. In terms of assembly, part of the 50S ribosomal subunit; part of the 5S rRNA/L5/L18/L25 subcomplex. Contacts the 5S and 23S rRNAs.

Functionally, this is one of the proteins that bind and probably mediate the attachment of the 5S RNA into the large ribosomal subunit, where it forms part of the central protuberance. The chain is Large ribosomal subunit protein uL18 from Mycoplasmoides gallisepticum (strain R(low / passage 15 / clone 2)) (Mycoplasma gallisepticum).